Here is a 351-residue protein sequence, read N- to C-terminus: Inositol monophosphatase 3 (351 aa).

A helical transmembrane segment spans residues leucine 11–phenylalanine 31. The Mg(2+) site is built by glutamate 121, aspartate 162, leucine 164, aspartate 165, and aspartate 288. Glutamate 121 contacts substrate. Substrate contacts are provided by residues leucine 164–threonine 167 and aspartate 288.

It belongs to the inositol monophosphatase superfamily. Mg(2+) serves as cofactor.

The protein localises to the membrane. It catalyses the reaction a myo-inositol phosphate + H2O = myo-inositol + phosphate. Its pathway is polyol metabolism; myo-inositol biosynthesis; myo-inositol from D-glucose 6-phosphate: step 2/2. This is Inositol monophosphatase 3 (bpnt2) from Xenopus laevis (African clawed frog).